The primary structure comprises 137 residues: Large ribosomal subunit protein uL16 (137 aa).

Over residues 1–19 the composition is skewed to basic residues; sequence MLSPKKVKFRKQQRGRRTG. The segment at 1–20 is disordered; it reads MLSPKKVKFRKQQRGRRTGT.

The protein belongs to the universal ribosomal protein uL16 family. Part of the 50S ribosomal subunit.

Its function is as follows. Binds 23S rRNA and is also seen to make contacts with the A and possibly P site tRNAs. The protein is Large ribosomal subunit protein uL16 of Desulfosudis oleivorans (strain DSM 6200 / JCM 39069 / Hxd3) (Desulfococcus oleovorans).